We begin with the raw amino-acid sequence, 302 residues long: MSHLRMLVMIEEHGQVSAAAAAMNMTQPAASRMLSEMEAIVKSPLCQRASRGVVLTKFGEALALARRARTILLELREASRELNQMKSGSGGSVYIGAVTAPAISLVVPAIRRAMDTYPGIEINVQVESSNVLARELLAARHDFIIGRIPDDFDPGLFSIHEIGIERACLVVREGHPLMRGEPVTLQDLSGYDWVFQPPGALLRRTMEDVFLTHGVAMPRNVINTPSVVLTLALVCNTNAIAPIAQDMAEFVAGQQADMAEPAFCQRISNSWSSLTASLPPKAGSCRPAPACFMIWCWMKAVS.

Positions 1 to 56 constitute an HTH lysR-type domain; that stretch reads MSHLRMLVMIEEHGQVSAAAAAMNMTQPAASRMLSEMEAIVKSPLCQRASRGVVLT. Residues 16 to 35 constitute a DNA-binding region (H-T-H motif); it reads VSAAAAAMNMTQPAASRMLS.

It belongs to the LysR transcriptional regulatory family.

In terms of biological role, activator of the expression of chvE when bound to its inducer and represses its expression in the absence of inducer (L-arabinose, D-fucose or D-galactose). Negatively regulates its own expression. This is HTH-type transcriptional regulator GbpR (gbpR) from Rhizobium radiobacter (Agrobacterium tumefaciens).